The following is a 113-amino-acid chain: U11-theraphotoxin-Hhn1f (113 aa).

Positions methionine 1–alanine 21 are cleaved as a signal peptide. A propeptide spanning residues aspartate 22–arginine 74 is cleaved from the precursor. Residues glutamate 61 to cysteine 82 are disordered. Disulfide bonds link cysteine 75–cysteine 90, cysteine 82–cysteine 95, and cysteine 89–cysteine 110.

It belongs to the neurotoxin 14 (magi-1) family. 01 (HNTX-16) subfamily. As to expression, expressed by the venom gland.

It is found in the secreted. In terms of biological role, probable ion channel inhibitor. The sequence is that of U11-theraphotoxin-Hhn1f from Cyriopagopus hainanus (Chinese bird spider).